A 23-amino-acid chain; its full sequence is Thymidine phosphorylase (23 aa).

It belongs to the thymidine/pyrimidine-nucleoside phosphorylase family. Homodimer.

It carries out the reaction thymidine + phosphate = 2-deoxy-alpha-D-ribose 1-phosphate + thymine. Functionally, the enzymes which catalyze the reversible phosphorolysis of pyrimidine nucleosides are involved in the degradation of these compounds and in their utilization as carbon and energy sources, or in the rescue of pyrimidine bases for nucleotide synthesis. The chain is Thymidine phosphorylase (deoA) from Lacticaseibacillus rhamnosus (Lactobacillus rhamnosus).